Consider the following 739-residue polypeptide: MPVKMVAIFGASTVLWILFAVSQAFKIEISPEYKTLAQIGDSMLLTCSTTGCESPSFSWRTQIDSPLNGKVKTEGAKSVLTMDPVSFENEHSYLCTATCNSGKLERGIQVDIYSFPKDPEIQFSGPLEVGKPVMVKCLAPDVYPIDRLEIELFKGDRLMKKQDFVDEMAKKSLETKSLEVIFTPVIEDIEKALVCRAKLYIDQTDSIPKERETVRELQVYTSPKNTEISVHPSTRLHEGAAVTMTCASEGLPAPEIFWSKKLDNGVLQLLSGNATLTLIAMRMEDSGIYVCEGVNLVGRDKTEVELIVQEKPFTVDISPGSQVAAQVGDSVVLTCAAVGCDSPSFSWRTQTDSPLNGEVRDEGATSTLTLSPVGVEDEHSYLCTVTCQRRKLEKTIQVEVYSFPEDPEIEISGPLVHGRPVTVNCTVPNVYPFDHLEIELLKGETTLLNKFLREEIGTKSLETKSLEMTFIPTAEDTGKALVCLAKLHSSQMESEPKQRQSTQTLYVNVAPKEPTIWVSPSPVPEEGSPVNLTCSSDGFPTPKILWSRQLKNGELQPLSQNTTLSFMATKMEDSGIYVCEGINEAGISKKSVELIIQGSSKDIQLTVFPSKSVKEGDTVIISCTCGSVPEIWIILKKKAKTGDMVLKSVNGSYTIRKAQLQDAGVYECESKTEVGSQLRSLTLDVKGKENNKDYFSPELLALYFASSLVIPAIGMIIYFARKANMKGSYSLVEAQKSKV.

The first 24 residues, 1–24 (MPVKMVAIFGASTVLWILFAVSQA), serve as a signal peptide directing secretion. Ig-like C2-type domains lie at 25–111 (FKIE…IQVD), 119–212 (PEIQ…KERE), 223–309 (PKNT…LIVQ), 312–397 (PFTV…KTIQ), 408–506 (EIEI…QTLY), 514–595 (PTIW…VELI), and 601–682 (KDIQ…RSLT). Over 25–698 (FKIEISPEYK…ENNKDYFSPE (674 aa)) the chain is Extracellular. Intrachain disulfides connect C47–C95, C52–C99, C137–C195, C246–C291, and C335–C383. N-linked (GlcNAc...) asparagine glycosylation is present at N273. N424, N531, N561, and N650 each carry an N-linked (GlcNAc...) asparagine glycan. A disulfide bond links C534 and C579. A helical membrane pass occupies residues 699-720 (LLALYFASSLVIPAIGMIIYFA). At 721-739 (RKANMKGSYSLVEAQKSKV) the chain is on the cytoplasmic side.

Binds to ECMV-D capsid proteins and acts as a receptor for this virus. Cleaved by the metalloproteinase ADAM17 to generate the soluble form. In terms of processing, sialoglycoprotein. Post-translationally, ubiquitinated by TRIM65 via 'Lys-48'-linked ubiquitination; leading to proteasomal degradation. As to expression, expressed in aortic endothelial cells, with low expression in the descending thoracic aorta and the outer curvature of the aortic arch, where pulsatory shear stress exists, and high in the inner curvature of the aortic arch, where oscillatory shear stress prevails (at protein level). Expressed on inflamed vascular endothelium, as well as on macrophage-like and dendritic cell types in both normal and inflamed tissue.

Its subcellular location is the cell membrane. The protein resides in the secreted. Cell adhesion glycoprotein predominantly expressed on the surface of endothelial cells that plays an important role in immune surveillance and inflammation. Acts as a major regulator of leukocyte adhesion to the endothelium through interaction with different types of integrins. During inflammatory responses, binds ligands on the surface of activated endothelial cells to initiate the activation of calcium channels and the plasma membrane-associated small GTPase RAC1 leading to leukocyte transendothelial migration. Also serves as a quality-control checkpoint for entry into bone marrow by providing a 'don't-eat-me' stamping in the context of major histocompatibility complex (MHC) class-I presentation. The protein is Vascular cell adhesion protein 1 (Vcam1) of Rattus norvegicus (Rat).